A 116-amino-acid polypeptide reads, in one-letter code: Small ribosomal subunit protein bS16 (116 aa).

This sequence belongs to the bacterial ribosomal protein bS16 family.

The sequence is that of Small ribosomal subunit protein bS16 from Chlamydia trachomatis serovar L2 (strain ATCC VR-902B / DSM 19102 / 434/Bu).